Consider the following 681-residue polypeptide: Mitosis inhibitor nif1 (681 aa).

The segment at 22-43 (LNKKDGNDDDKAEHSKRSGYHG) is disordered. Residues 23-37 (NKKDGNDDDKAEHSK) show a composition bias toward basic and acidic residues. At serine 70 the chain carries Phosphoserine. Disordered regions lie at residues 80-104 (TTSG…SSPF) and 182-324 (YYHE…SSRQ). Low complexity predominate over residues 92–103 (ESPASPAEASSP). The segment covering 191–203 (TASNTSPTPNSIK) has biased composition (polar residues). Serine 196 is subject to Phosphoserine. A compositionally biased stretch (low complexity) spans 238-278 (SSGDSTPLSGSSSSKGMLMSMSTSENHSLSSNPELSNSNLL). Residues 296–306 (SSKEPDKEHST) are compositionally biased toward basic and acidic residues. 2 Sel1-like repeats span residues 547–582 (ALIL…AWGD) and 583–618 (ADAQ…FQGI).

Its subcellular location is the cytoplasm. Functions as a negative regulator of mitosis. It interacts with the C-terminal of nim1, thereby inhibiting its kinase activity which phosphorylates wee1. The sequence is that of Mitosis inhibitor nif1 (nif1) from Schizosaccharomyces pombe (strain 972 / ATCC 24843) (Fission yeast).